Here is a 497-residue protein sequence, read N- to C-terminus: Amino acid oxidase fsqB (497 aa).

Residues valine 14, phenylalanine 15, aspartate 38, asparagine 53, alanine 57, asparagine 58, arginine 63, valine 64, and valine 211 each coordinate FAD. Cysteine 414 carries the S-8alpha-FAD cysteine modification. Phenylalanine 447 and lysine 448 together coordinate FAD.

Belongs to the MSOX/MTOX family. As to quaternary structure, dimer. FAD serves as cofactor.

It catalyses the reaction (2S,4S,5S)-2-amino-6-(3,4-dihydroxyphenyl)-4-hydroxy-5-(methylamino)hexanoyl-[peptidyl-carrier protein] + O2 = (2S,4S)-2-amino-4-[(3S)-7,8-dihydroxy-1,2,3,4-tetrahydroisoquinolin-3-yl]-4-hydroxybutanoyl-[peptidyl-carrier protein] + H2O2. The catalysed reaction is N-methyl-L-dopa + O2 = (3S)-7,8-dihydroxy-1,2,3,4-tetrahydroisoquinoline-3-carboxylate + H2O2. The enzyme catalyses N-methyl-D-dopa + O2 = (3R)-7,8-dihydroxy-1,2,3,4-tetrahydroisoquinoline-3-carboxylate + H2O2. Its pathway is secondary metabolite biosynthesis. Amino acid oxidase; part of the gene cluster that mediates the biosynthesis of the isoquinoline alkaloids fumisoquin A, fumisoquin B and fumisoquin C; as well as small amounts of fumipyrrole as a shunt metabolite. The products of the cluster lead to a brown coloration and are important for growth and conidiation. The nonribosomal peptide synthetase-like protein fsqF, which lacks a canonical condensation domain, is required for addition of a serine-derived dehydroalanine moiety to activated tyrosine but is not essential for the subsequent steps leading to isoquinoline formation. A different enzyme, most likely the ATP-grasp enzyme fsqD, is responsible for activation of tyrosine. Three additional enzymes encoded by the fsq cluster, the N-methyltransferase fsqC, the phenol 2-monooxygenase fsqG and the FAD-dependent oxidase fsqB, catalyze the formation of the isoquinoline ring system in the fumisoquins. FsqB converts the fspF thiolation domain-bound (2S,4S,5S)-2-amino-6-(3,4-dihydroxyphenyl)-4-hydroxy-5-(methylamino)hexanoyl into isoquinoline. The cyclization most likely proceeds via a two-step mechanism, beginning with FAD-dependent oxidation of the methyl group to an iminium species followed by electrophilic attack on the deprotonated phenol. Its function is as follows. Is able to convert N-methyl-3,4-dihydroxy-DL-phenylalanine (N-methyl-DOPA) directly into cyclic isoquinoline, in vitro. The absence of the meta-hydroxyl group, as in L-N-methyl-tyrosine, leads to a 25-fold lower rate of reduction and the formation of the demethylated product L-tyrosine, instead of a cyclic product. Does not accept the D-stereoisomer of N-methyltyrosine, in contrast to N-methyl-DOPA, for which both stereoisomers are oxidized with similar rates. In Aspergillus fumigatus (strain ATCC MYA-4609 / CBS 101355 / FGSC A1100 / Af293) (Neosartorya fumigata), this protein is Amino acid oxidase fsqB.